An 87-amino-acid polypeptide reads, in one-letter code: Large ribosomal subunit protein bL31B (87 aa).

It belongs to the bacterial ribosomal protein bL31 family. Type B subfamily. As to quaternary structure, part of the 50S ribosomal subunit.

This chain is Large ribosomal subunit protein bL31B, found in Staphylococcus carnosus (strain TM300).